Here is a 295-residue protein sequence, read N- to C-terminus: Protein FAM221A (295 aa).

Residues 244–295 (SEPPGIDKQVSSMRLSEEDDMAYFERRYQERLRKEKEHKRQKNSKPPTTQRP) form a disordered region. The segment covering 266 to 278 (YFERRYQERLRKE) has biased composition (basic and acidic residues).

It belongs to the FAM221 family.

The protein is Protein FAM221A (fam221a) of Xenopus laevis (African clawed frog).